The chain runs to 69 residues: Cold shock protein CapB (69 aa).

Residues 7 to 66 form the CSD domain; sequence GTVKWFNDEKGFGFITPQSGDDLFVHFKAIQSDGFKSLKEGQQVSFIATRGQKGMQAEEV.

The protein resides in the cytoplasm. Affects cell viability at low temperatures. This is Cold shock protein CapB (capB) from Pseudomonas fragi.